The following is a 323-amino-acid chain: tRNA U34 carboxymethyltransferase (323 aa).

Residues Lys91, Trp105, Lys110, Gly130, 152–154 (DPT), 181–182 (IE), Met196, Tyr200, and Arg315 contribute to the carboxy-S-adenosyl-L-methionine site.

Belongs to the class I-like SAM-binding methyltransferase superfamily. CmoB family. Homotetramer.

The catalysed reaction is carboxy-S-adenosyl-L-methionine + 5-hydroxyuridine(34) in tRNA = 5-carboxymethoxyuridine(34) in tRNA + S-adenosyl-L-homocysteine + H(+). Its function is as follows. Catalyzes carboxymethyl transfer from carboxy-S-adenosyl-L-methionine (Cx-SAM) to 5-hydroxyuridine (ho5U) to form 5-carboxymethoxyuridine (cmo5U) at position 34 in tRNAs. The protein is tRNA U34 carboxymethyltransferase of Salmonella enteritidis PT4 (strain P125109).